The following is a 421-amino-acid chain: Probable N-acetylgalactosaminyltransferase 8 (421 aa).

Over 1–3 (MRR) the chain is Cytoplasmic. Residues 4–24 (HVVLSIFVFAGIVFAAEEAEK) form a helical; Signal-anchor for type II membrane protein membrane-spanning segment. Residues 25–421 (LPKCEHVDPY…ELEPKVHDEL (397 aa)) are Lumenal-facing. 2 N-linked (GlcNAc...) asparagine glycosylation sites follow: N52 and N58. 2 disulfides stabilise this stretch: C98/C331 and C322/C399. The interval 106-219 (SYSTSVVVIH…ERWLEPLLQP (114 aa)) is catalytic subdomain A. Substrate contacts are provided by D147 and R180. Mn(2+) is bound at residue D203. S204 is a substrate binding site. H205 provides a ligand contact to Mn(2+). Residues 277 to 339 (PFNSPAMPGG…PCSRVGHVFR (63 aa)) form a catalytic subdomain B region. W308 serves as a coordination point for substrate. Mn(2+) is bound at residue H336. Substrate is bound by residues R339 and Y344. Residues 418 to 421 (HDEL) carry the Prevents secretion from ER motif.

It belongs to the glycosyltransferase 2 family. GalNAc-T subfamily. The cofactor is Mn(2+).

It is found in the golgi apparatus membrane. Its pathway is protein modification; protein glycosylation. In terms of biological role, potential glycopeptide transferase involved in O-linked oligosaccharide biosynthesis. In contrast to other members of the family, it does not act as a peptide transferase that transfers GalNAc onto serine or threonine residue on peptides that have been tested. Some peptide transferase activity is however not excluded, considering that its appropriate peptide substrate may remain unidentified. This is Probable N-acetylgalactosaminyltransferase 8 (gly-8) from Caenorhabditis elegans.